Reading from the N-terminus, the 488-residue chain is MASKILLNVQEEVTCPICLELLTEPLSLDCGHSLCRACITVSNKEAVTSMGGKSSCPVCGISYSFEHLQANQHLANIVERLKEVKLSPDNGKKRDLCDHHGEKLLLFCKEDRKVICWLCERSQEHRGHHTVLTEEVFKECQEKLQAVLKRLKKEEEEAEKLEADIREEKTSWKYQVQTERQRIQTEFDQLRSILNNEEQRELQRLEEEEKKTLDKFAEAEDELVQQKQLVRELISDVECRSQWSTMELLQDMSGIMKWSEIWRLKKPKMVSKKLKTVFHAPDLSRMLQMFRELTAVRCYWVDVTLNSVNLNLNLVLSEDQRQVISVPIWPFQCYNYGVLGSQYFSSGKHYWEVDVSKKTAWILGVYCRTYSRHMKYVVRRCANRQNLYTKYRPLFGYWVIGLQNKCKYGVFEESLSSDPEVLTLSMAVPPCRVGVFLDYEAGIVSFFNVTSHGSLIYKFSKCCFSQPVYPYFNPWNCPAPMTLCPPSS.

Residues 15–60 (CPICLELLTEPLSLDCGHSLCRACITVSNKEAVTSMGGKSSCPVCG) form an RING-type zinc finger. A B box-type zinc finger spans residues 92–134 (KKRDLCDHHGEKLLLFCKEDRKVICWLCERSQEHRGHHTVLTE). Residues Cys-97, His-100, Cys-119, and His-125 each contribute to the Zn(2+) site. The stretch at 131 to 239 (VLTEEVFKEC…VRELISDVEC (109 aa)) forms a coiled coil. Positions 283–488 (LSRMLQMFRE…APMTLCPPSS (206 aa)) constitute a B30.2/SPRY domain.

The protein belongs to the TRIM/RBCC family. Homotrimer. Interacts (via B-box and SPRY domain) with TRIM5. In terms of assembly, (Microbial infection) Interacts (via the B30.2/SPRY domain) with HIV-1 capsid complexes. In terms of tissue distribution, is the most abundant form. It is highly expressed in the placenta, spleen, colon and peripheral blood leukocytes.

It is found in the cytoplasm. It localises to the mitochondrion. The catalysed reaction is S-ubiquitinyl-[E2 ubiquitin-conjugating enzyme]-L-cysteine + [acceptor protein]-L-lysine = [E2 ubiquitin-conjugating enzyme]-L-cysteine + N(6)-ubiquitinyl-[acceptor protein]-L-lysine.. It functions in the pathway protein modification; protein ubiquitination. Functionally, functions as antiviral protein and contributes to the defense against retroviral infections. Acts as a capsid-specific restriction factor with the help of TRIM5 and prevents infection from non-host-adapted retroviruses. During influenza A virus infection, promotes programmed cell death by targeting ZBP1 for 'Lys-63'-linked polyubiquitination. In turn, promotes ZBP1 recruitment of RIPK3 to mediate virus-induced programmed necrosis. Negatively regulates the function of mitochondria by enhancing mitochondrial depolarization leading to cytochrome c release and mitochondria-dependent apoptosis. Also promotes the formation of multinucleated giant cells by means of cell fusion and phagocytosis in epithelial cells. This chain is E3 ubiquitin-protein ligase TRIM34 (TRIM34), found in Homo sapiens (Human).